An 82-amino-acid chain; its full sequence is Small ribosomal subunit protein uS17 (82 aa).

Belongs to the universal ribosomal protein uS17 family. Part of the 30S ribosomal subunit.

In terms of biological role, one of the primary rRNA binding proteins, it binds specifically to the 5'-end of 16S ribosomal RNA. This Thermosynechococcus vestitus (strain NIES-2133 / IAM M-273 / BP-1) protein is Small ribosomal subunit protein uS17.